The following is a 132-amino-acid chain: NADH-quinone oxidoreductase subunit A 2 (132 aa).

The next 3 membrane-spanning stretches (helical) occupy residues 10–30, 66–86, and 93–113; these read WALL…LGLG, LVAM…LWAV, and WAGF…LFYL.

The protein belongs to the complex I subunit 3 family. In terms of assembly, NDH-1 is composed of 13 different subunits. Subunits NuoA, H, J, K, L, M, N constitute the membrane sector of the complex.

It is found in the cell inner membrane. It catalyses the reaction a quinone + NADH + 5 H(+)(in) = a quinol + NAD(+) + 4 H(+)(out). Its function is as follows. NDH-1 shuttles electrons from NADH, via FMN and iron-sulfur (Fe-S) centers, to quinones in the respiratory chain. The immediate electron acceptor for the enzyme in this species is believed to be ubiquinone. Couples the redox reaction to proton translocation (for every two electrons transferred, four hydrogen ions are translocated across the cytoplasmic membrane), and thus conserves the redox energy in a proton gradient. This Pseudomonas aeruginosa (strain UCBPP-PA14) protein is NADH-quinone oxidoreductase subunit A 2.